Consider the following 509-residue polypeptide: tRNA (guanine(37)-N(1))-methyltransferase (509 aa).

S-adenosyl-L-methionine contacts are provided by residues histidine 289, 327–328 (DL), 355–356 (DG), and asparagine 387. The disordered stretch occupies residues 478–509 (TRNPENHEDPPLKRQRTAEAFSDEKTQIVSNT).

It belongs to the class I-like SAM-binding methyltransferase superfamily. TRM5/TYW2 family. In terms of assembly, monomer.

The protein localises to the mitochondrion matrix. It localises to the nucleus. It is found in the cytoplasm. It carries out the reaction guanosine(37) in tRNA + S-adenosyl-L-methionine = N(1)-methylguanosine(37) in tRNA + S-adenosyl-L-homocysteine + H(+). Its function is as follows. Involved in mitochondrial tRNA methylation. Specifically methylates the N1 position of guanosine-37 in various tRNAs. Methylation is not dependent on the nature of the nucleoside 5' of the target nucleoside. This is the first step in the biosynthesis of wybutosine (yW), a modified base adjacent to the anticodon of tRNAs and required for accurate decoding. This chain is tRNA (guanine(37)-N(1))-methyltransferase, found in Homo sapiens (Human).